We begin with the raw amino-acid sequence, 510 residues long: Xylose import ATP-binding protein XylG (510 aa).

2 ABC transporter domains span residues 5–242 (LEMK…VGRE) and 259–505 (LRVE…LRSE). An ATP-binding site is contributed by 37–44 (GENGSGKS).

Belongs to the ABC transporter superfamily. Xylose importer (TC 3.A.1.2.4) family. As to quaternary structure, the complex is composed of two ATP-binding proteins (XylG), two transmembrane proteins (XylH) and a solute-binding protein (XylF).

The protein resides in the cell inner membrane. The catalysed reaction is D-xylose(out) + ATP + H2O = D-xylose(in) + ADP + phosphate + H(+). In terms of biological role, part of the ABC transporter complex XylFGH involved in xylose import. Responsible for energy coupling to the transport system. The polypeptide is Xylose import ATP-binding protein XylG (Yersinia pestis).